The sequence spans 84 residues: PAMP-induced secreted peptide 2 (84 aa).

The first 24 residues, 1-24 (MMMNKNVLSSILFFMLIGSVLVES), serve as a signal peptide directing secretion. A disordered region spans residues 50 to 84 (KDSGPSPGEGHKVVDRKDTFRFVKHSGPSPSGPGH). Basic and acidic residues predominate over residues 58 to 70 (EGHKVVDRKDTFR). P77 and P79 each carry 4-hydroxyproline.

Post-translationally, contains 4-hydroxyproline; hydroxylated on Pro-77 and Pro-79.

It is found in the secreted. Its subcellular location is the extracellular space. The protein localises to the apoplast. Endogenous secreted peptide that acts as elicitor of immune response and positive regulator of defense response. Amplifies the immune response triggered by flg22, the active epitope of bacterial flagellin. Acts as a negative regulator of root growth. The protein is PAMP-induced secreted peptide 2 of Arabidopsis thaliana (Mouse-ear cress).